We begin with the raw amino-acid sequence, 361 residues long: MSKRAFNFCAGPAALPEAVLLRAQAELLDWHGKGLSVMEMSHRSDEFVSIANKAEQDLRDLLSIPSNYKVLFLQGGASQQFAQIALNLLPENGKADYIDTGIWSQKAIDEASRYGTINVAASAKAYDYFAIPGQNEWTLSRDAAYVHYAPNETIGGLEFNWIPETGDVPLVADMSSDILSRPVDISRFGMIYAGAQKNIGPSGVVVVIIREDLLGRARTLCPTMLDYKVAADNGSMYNTPPTLAWYLSGLVFEWLKEQGGVEAIGKLNDIKQRTLYDFIDASGLYSNPINTPDRSWMNVPFRLADDRLDKPFLAGADANGLLNLKGHRSVGGMRASIYNAVDINAVNALVAYMKDFEKEHG.

Arg-43 provides a ligand contact to L-glutamate. Pyridoxal 5'-phosphate is bound by residues 77–78 (AS), Trp-103, Thr-153, Asp-173, and Gln-196. Lys-197 is subject to N6-(pyridoxal phosphate)lysine. Position 238 to 239 (238 to 239 (NT)) interacts with pyridoxal 5'-phosphate.

It belongs to the class-V pyridoxal-phosphate-dependent aminotransferase family. SerC subfamily. As to quaternary structure, homodimer. Pyridoxal 5'-phosphate serves as cofactor.

It is found in the cytoplasm. The enzyme catalyses O-phospho-L-serine + 2-oxoglutarate = 3-phosphooxypyruvate + L-glutamate. The catalysed reaction is 4-(phosphooxy)-L-threonine + 2-oxoglutarate = (R)-3-hydroxy-2-oxo-4-phosphooxybutanoate + L-glutamate. The protein operates within amino-acid biosynthesis; L-serine biosynthesis; L-serine from 3-phospho-D-glycerate: step 2/3. It functions in the pathway cofactor biosynthesis; pyridoxine 5'-phosphate biosynthesis; pyridoxine 5'-phosphate from D-erythrose 4-phosphate: step 3/5. Its function is as follows. Catalyzes the reversible conversion of 3-phosphohydroxypyruvate to phosphoserine and of 3-hydroxy-2-oxo-4-phosphonooxybutanoate to phosphohydroxythreonine. The sequence is that of Phosphoserine aminotransferase from Pseudomonas syringae pv. tomato (strain ATCC BAA-871 / DC3000).